A 257-amino-acid chain; its full sequence is Acetylglutamate kinase (257 aa).

Residues 43-44 (GG), Arg65, and Asn157 each bind substrate. Residues 180–185 (DISSIL) and 208–210 (IIT) each bind ATP.

It belongs to the acetylglutamate kinase family. ArgB subfamily. Homodimer.

The protein localises to the cytoplasm. The catalysed reaction is N-acetyl-L-glutamate + ATP = N-acetyl-L-glutamyl 5-phosphate + ADP. The protein operates within amino-acid biosynthesis; L-arginine biosynthesis; N(2)-acetyl-L-ornithine from L-glutamate: step 2/4. Its function is as follows. Catalyzes the ATP-dependent phosphorylation of N-acetyl-L-glutamate. This is Acetylglutamate kinase from Buchnera aphidicola subsp. Acyrthosiphon pisum (strain 5A).